A 99-amino-acid polypeptide reads, in one-letter code: Putative septation protein SpoVG (99 aa).

It belongs to the SpoVG family.

Its function is as follows. Could be involved in septation. The polypeptide is Putative septation protein SpoVG (Onion yellows phytoplasma (strain OY-M)).